The chain runs to 248 residues: Homeobox protein Hox-A4 (248 aa).

The disordered stretch occupies residues 23 to 107 (YQQSGYIPNP…PDGGAGANAS (85 aa)). Residues 35-51 (YYERPKDTGFPHHDEPS) show a composition bias toward basic and acidic residues. The Antp-type hexapeptide signature appears at 128 to 133 (VYPWMK). A DNA-binding region (homeobox) is located at residues 149–208 (PKRSRTAYTRQQALELEKEFHFNRYLTRRRRVEIAHTMCLSERQVKIWFQNRRMKWKKEH). The segment at 207-248 (EHKLPNTKIRSSSSASSSASGAQQQQIKTGQQLVPTPCTAGL) is disordered. Low complexity predominate over residues 217–238 (SSSSASSSASGAQQQQIKTGQQ).

This sequence belongs to the Antp homeobox family. Deformed subfamily.

Its subcellular location is the nucleus. Functionally, sequence-specific transcription factor which is part of a developmental regulatory system that provides cells with specific positional identities on the anterior-posterior axis. The protein is Homeobox protein Hox-A4 (hoxa4) of Morone saxatilis (Striped bass).